The primary structure comprises 778 residues: MIVTRSWLNEWIDISTISTDKLVKTLNSIGLEVDSISSYEVPQKIVFGRVLECKKHPDADKLNICQVDIGVSTRQIVCGASNVRAGLDVVVATIGAVMPDGTIIKPVTLRGIESEGMICSAKEIGLADINSGIIEIDSSIGKYKIGEEVSQNHLFSDDIIEVELTANRGDCLSIRGVARDLSAAFDKPLRERKIQEDEDKRVGIGRILSLSHENNLGVNIRYKAVDFKNLTLPFIVRLRLSQLDDKKESDVESLMLYATHSSGVILRAYDYALFCAKDETMAKISLCRDKNGFASVMTKDKKVSIVGVMQEELFKVAHSNGVVLIEATYIPPDVISKKMQENKIPAGISYYRASRGSEPDLNQGLDYCISVIEDNSESSVYGGTIEIDEPHEDKIISLNKKEIDEIVGANIDKAKITKILKNLGFDTTKSLADNFVIIVPKFRHDIVNKQDIVEEIVRLVGIDNIPSKPFTFTETNSFSSDYYDYKKRVTYRHKAAFSGFFESVHFVFDEKKVLQEYGFEILDESKELLNPIVNTLDTLRSTLLCGLLRATSNNINNGYSSVKLFEVGSVFNSQREESLKMALIFSGDREAESLANTGKPAKVDFALFVQKVSNVIGEFELREYKTKHTLSHPYQCAEIFIKEVSVGEIFRLHPNVEQKYDLDVTYMCELNFNKLPNDLKTAKQSSKYQASFRDLSIVMPQEMAYEKIKNVIDASSTKELVRFYVVDKYSDKSLGENMSLSIRFVLQSFDKTLEEEEITNAMNTILEALKNQLGVGIR.

The tRNA-binding domain occupies 39-150 (YEVPQKIVFG…GKYKIGEEVS (112 aa)). The B5 domain occupies 391-467 (HEDKIISLNK…RLVGIDNIPS (77 aa)). Mg(2+) is bound by residues Asp445, Asp451, Glu454, and Glu455. The region spanning 686-778 (SKYQASFRDL…LKNQLGVGIR (93 aa)) is the FDX-ACB domain.

It belongs to the phenylalanyl-tRNA synthetase beta subunit family. Type 1 subfamily. As to quaternary structure, tetramer of two alpha and two beta subunits. The cofactor is Mg(2+).

Its subcellular location is the cytoplasm. It carries out the reaction tRNA(Phe) + L-phenylalanine + ATP = L-phenylalanyl-tRNA(Phe) + AMP + diphosphate + H(+). The sequence is that of Phenylalanine--tRNA ligase beta subunit from Sulfurimonas denitrificans (strain ATCC 33889 / DSM 1251) (Thiomicrospira denitrificans (strain ATCC 33889 / DSM 1251)).